The primary structure comprises 1235 residues: High-affinity potassium transport protein (1235 aa).

At Ser15 the chain carries Phosphoserine. Transmembrane regions (helical) follow at residues 49–70 (SFIA…ILLY) and 78–98 (IDTL…TVDI). A glycan (N-linked (GlcNAc...) asparagine) is linked at Asn100. Residues 107–127 (IVLYIVCCISTPIAVHSCLAF) traverse the membrane as a helical segment. 4 disordered regions span residues 161 to 310 (LTAR…SPAD), 323 to 344 (EATA…GTRY), 361 to 441 (KIKI…TKPP), and 488 to 565 (RLST…HQLQ). Polar residues predominate over residues 164–179 (RTMTKNRTGTQRTSYP). Residue Asn169 is glycosylated (N-linked (GlcNAc...) asparagine). The span at 198 to 217 (VNRDEQDSVHSDQNSHDISR) shows a compositional bias: basic and acidic residues. Low complexity predominate over residues 219–232 (SSNNNTNHNGSSGS). Asn222 and Asn227 each carry an N-linked (GlcNAc...) asparagine glycan. Acidic residues predominate over residues 237–247 (VKEDETDDNGE). A compositionally biased stretch (polar residues) spans 248 to 274 (YQENNSYSTVGSSSNTVADESLNQKPK). A glycan (N-linked (GlcNAc...) asparagine) is linked at Asn251. N-linked (GlcNAc...) asparagine glycans are attached at residues Asn369 and Asn383. Polar residues-rich tracts occupy residues 370–415 (ESNT…SNSG) and 490–502 (STGS…SNNV). The residue at position 414 (Ser414) is a Phosphoserine. N-linked (GlcNAc...) asparagine glycans are attached at residues Asn497, Asn501, and Asn532. Over residues 510–539 (DMDDDDDDDDNDGDNNEEYFADNESGDEDE) the composition is skewed to acidic residues. Ser534 carries the post-translational modification Phosphoserine. Residues 540 to 563 (RVQQSEPHSDSELKSHQQQQEKHQ) show a composition bias toward basic and acidic residues. N-linked (GlcNAc...) asparagine glycans are attached at residues Asn580 and Asn677. The interval 671–706 (HDGSHKNGSEEASSDSNENIYSTNGGSDHNGLNNYP) is disordered. Residues 680 to 706 (EEASSDSNENIYSTNGGSDHNGLNNYP) are compositionally biased toward polar residues. 5 consecutive transmembrane segments (helical) span residues 778–800 (ILVV…WIIL), 813–834 (VSPT…GLTL), 838–858 (SMMS…FIII), 862–882 (GFPI…PDLS), and 898–918 (CFTL…LAGL). Asn919 carries N-linked (GlcNAc...) asparagine glycosylation. 2 helical membrane-spanning segments follow: residues 923–943 (WILF…SKGY) and 971–991 (SIQV…AISI). The tract at residues 1003–1063 (GLYGDMGGEP…KKKKKTENPN (61 aa)) is disordered. Acidic residues predominate over residues 1010-1031 (GEPEDTDTEDDGNDEDDDEENE). An N-linked (GlcNAc...) asparagine glycan is attached at Asn1030. Residues 1036-1049 (QSSQRSSSNNNNNN) show a composition bias toward low complexity. Transmembrane regions (helical) follow at residues 1078–1098 (QLSF…ICEG) and 1111–1131 (IFAI…SLGY). N-linked (GlcNAc...) asparagine glycosylation is present at Asn1135.

It belongs to the TrkH potassium transport family.

Its subcellular location is the membrane. Functionally, this protein is required for high-affinity potassium transport. The polypeptide is High-affinity potassium transport protein (TRK1) (Saccharomyces cerevisiae (strain ATCC 204508 / S288c) (Baker's yeast)).